A 113-amino-acid polypeptide reads, in one-letter code: Hydrogenase maturation factor HypA (113 aa).

His2 contributes to the Ni(2+) binding site. Residues Cys73, Cys76, Cys89, and Cys92 each contribute to the Zn(2+) site.

It belongs to the HypA/HybF family.

Functionally, involved in the maturation of [NiFe] hydrogenases. Required for nickel insertion into the metal center of the hydrogenase. This Azorhizobium caulinodans (strain ATCC 43989 / DSM 5975 / JCM 20966 / LMG 6465 / NBRC 14845 / NCIMB 13405 / ORS 571) protein is Hydrogenase maturation factor HypA.